A 318-amino-acid chain; its full sequence is NADH-ubiquinone oxidoreductase chain 1 (318 aa).

A run of 8 helical transmembrane segments spans residues 2–22, 68–88, 100–120, 147–167, 171–191, 217–237, 254–273, and 294–314; these read FMLNLLTMIVPVLLAVAFLTL, ITMFIMAPILALTLALTMWIP, LGVLFMLAMSSLAVYALLWSG, AIILLSTLLMSGSYSLSTLII, YIWLILPSWPLTMMWFISTLA, GGPFALFFLAEYANIIMMNAL, LYTTNFAMKTLLLTMSFLWI, and LPLTLALCMWYVTMPIMMAGI.

It belongs to the complex I subunit 1 family.

The protein localises to the mitochondrion inner membrane. It catalyses the reaction a ubiquinone + NADH + 5 H(+)(in) = a ubiquinol + NAD(+) + 4 H(+)(out). Its function is as follows. Core subunit of the mitochondrial membrane respiratory chain NADH dehydrogenase (Complex I) that is believed to belong to the minimal assembly required for catalysis. Complex I functions in the transfer of electrons from NADH to the respiratory chain. The immediate electron acceptor for the enzyme is believed to be ubiquinone. This is NADH-ubiquinone oxidoreductase chain 1 (MT-ND1) from Hsunycteris thomasi (Thomas's nectar bat).